A 738-amino-acid chain; its full sequence is DNA repair and recombination protein RAD54-like (738 aa).

The tract at residues 1-31 (MRRSLAPSQVAKRKQGPDSDDEEDWEPDMEP) is disordered. Acidic residues predominate over residues 18–29 (DSDDEEDWEPDM). The Helicase ATP-binding domain occupies 164 to 339 (GRRIENSYGC…FSLVHFVNSG (176 aa)). 177–184 (DEMGLGKT) serves as a coordination point for ATP. Residues 290-293 (DEGH) carry the DEAH box motif. In terms of domain architecture, Helicase C-terminal spans 493–647 (LVLDYILAMT…CVVDEEQDVE (155 aa)). Phosphoserine occurs at positions 566 and 567.

In terms of assembly, homohexamer. Interacts with RAD51. Post-translationally, phosphorylated. Phosphorylations at Ser-566 and Ser-567 allow efficient removal of RAD51 filaments from DNA.

It catalyses the reaction ATP + H2O = ADP + phosphate + H(+). Its function is as follows. Plays an essential role in homologous recombination (HR) which is a major pathway for repairing DNA double-strand breaks (DSBs), single-stranded DNA (ssDNA) gaps, and stalled or collapsed replication forks. Acts as a molecular motor during the homology search and guides RAD51 ssDNA along a donor dsDNA thereby changing the homology search from the diffusion-based mechanism to a motor-guided mechanism. Also plays an essential role in RAD51-mediated synaptic complex formation which consists of three strands encased in a protein filament formed once homology is recognized. Once DNA strand exchange occured, dissociates RAD51 from nucleoprotein filaments formed on dsDNA. The protein is DNA repair and recombination protein RAD54-like (rad54l) of Danio rerio (Zebrafish).